Consider the following 191-residue polypeptide: Sec-independent protein translocase protein TatB (191 aa).

A helical transmembrane segment spans residues 1–21 (MFDIGFSELFLILVIGLLVLG). Residues 119 to 138 (ESTSQTLTEQLTPSEQVTEA) show a composition bias toward polar residues. 2 disordered regions span residues 119 to 139 (ESTSQTLTEQLTPSEQVTEAT) and 168 to 191 (DDDDEPVFASKVKPQTEEIQDKKA). Residues 181-191 (PQTEEIQDKKA) are compositionally biased toward basic and acidic residues.

It belongs to the TatB family. In terms of assembly, the Tat system comprises two distinct complexes: a TatABC complex, containing multiple copies of TatA, TatB and TatC subunits, and a separate TatA complex, containing only TatA subunits. Substrates initially bind to the TatABC complex, which probably triggers association of the separate TatA complex to form the active translocon.

It is found in the cell inner membrane. Functionally, part of the twin-arginine translocation (Tat) system that transports large folded proteins containing a characteristic twin-arginine motif in their signal peptide across membranes. Together with TatC, TatB is part of a receptor directly interacting with Tat signal peptides. TatB may form an oligomeric binding site that transiently accommodates folded Tat precursor proteins before their translocation. The chain is Sec-independent protein translocase protein TatB from Pasteurella multocida (strain Pm70).